A 213-amino-acid chain; its full sequence is Riboflavin/roseoflavin transporter RibM (213 aa).

Helical transmembrane passes span 15 to 35, 38 to 58, 107 to 129, 136 to 158, and 171 to 193; these read HIIW…ALGF, SLWT…AFYG, IAAA…SLSW, YIFV…FWFA, and FANG…LWGM.

The protein belongs to the nicotinamide ribonucleoside (NR) uptake permease (TC 4.B.1) family.

It localises to the cell membrane. Functionally, transports riboflavin and roseoflavin. Can also transport FMN and FAD. May confer roseoflavin resistance to S.davawensis, which naturally produces this antibiotic during stationary growth phase. The protein is Riboflavin/roseoflavin transporter RibM of Streptomyces davaonensis (strain DSM 101723 / JCM 4913 / KCC S-0913 / 768).